The following is a 331-amino-acid chain: Beta-ketoacyl-[acyl-carrier-protein] synthase III (331 aa).

Catalysis depends on residues C115 and H255. An ACP-binding region spans residues 256 to 260 (QANFR). The active site involves N285.

The protein belongs to the thiolase-like superfamily. FabH family. As to quaternary structure, homodimer.

The protein resides in the cytoplasm. The catalysed reaction is malonyl-[ACP] + acetyl-CoA + H(+) = 3-oxobutanoyl-[ACP] + CO2 + CoA. Its pathway is lipid metabolism; fatty acid biosynthesis. Functionally, catalyzes the condensation reaction of fatty acid synthesis by the addition to an acyl acceptor of two carbons from malonyl-ACP. Catalyzes the first condensation reaction which initiates fatty acid synthesis and may therefore play a role in governing the total rate of fatty acid production. Possesses both acetoacetyl-ACP synthase and acetyl transacylase activities. Its substrate specificity determines the biosynthesis of branched-chain and/or straight-chain of fatty acids. This Helicobacter pylori (strain Shi470) protein is Beta-ketoacyl-[acyl-carrier-protein] synthase III.